Consider the following 360-residue polypeptide: UDP-N-acetylglucosamine--N-acetylmuramyl-(pentapeptide) pyrophosphoryl-undecaprenol N-acetylglucosamine transferase (360 aa).

UDP-N-acetyl-alpha-D-glucosamine-binding positions include 16-18 (TGG), N128, R165, S191, I247, 266-271 (ALTVSE), and Q292.

Belongs to the glycosyltransferase 28 family. MurG subfamily.

Its subcellular location is the cell inner membrane. The enzyme catalyses di-trans,octa-cis-undecaprenyl diphospho-N-acetyl-alpha-D-muramoyl-L-alanyl-D-glutamyl-meso-2,6-diaminopimeloyl-D-alanyl-D-alanine + UDP-N-acetyl-alpha-D-glucosamine = di-trans,octa-cis-undecaprenyl diphospho-[N-acetyl-alpha-D-glucosaminyl-(1-&gt;4)]-N-acetyl-alpha-D-muramoyl-L-alanyl-D-glutamyl-meso-2,6-diaminopimeloyl-D-alanyl-D-alanine + UDP + H(+). It functions in the pathway cell wall biogenesis; peptidoglycan biosynthesis. Functionally, cell wall formation. Catalyzes the transfer of a GlcNAc subunit on undecaprenyl-pyrophosphoryl-MurNAc-pentapeptide (lipid intermediate I) to form undecaprenyl-pyrophosphoryl-MurNAc-(pentapeptide)GlcNAc (lipid intermediate II). The protein is UDP-N-acetylglucosamine--N-acetylmuramyl-(pentapeptide) pyrophosphoryl-undecaprenol N-acetylglucosamine transferase of Shewanella amazonensis (strain ATCC BAA-1098 / SB2B).